Reading from the N-terminus, the 239-residue chain is Riboflavin synthase (239 aa).

Lumazine-binding repeat units lie at residues 1–105 (MFTG…MGGH) and 106–205 (VVQG…EKQI). 2,4-dihydroxypteridine contacts are provided by residues 4-6 (GLV), 54-56 (CLT), 70-75 (GISPET), 109-111 (GHV), K145, 154-156 (SLT), and 170-175 (SMVSYT).

In terms of assembly, homotrimer.

It catalyses the reaction 2 6,7-dimethyl-8-(1-D-ribityl)lumazine + H(+) = 5-amino-6-(D-ribitylamino)uracil + riboflavin. It functions in the pathway cofactor biosynthesis; riboflavin biosynthesis; riboflavin from 2-hydroxy-3-oxobutyl phosphate and 5-amino-6-(D-ribitylamino)uracil: step 2/2. Catalyzes the dismutation of two molecules of 6,7-dimethyl-8-ribityllumazine, resulting in the formation of riboflavin and 5-amino-6-(D-ribitylamino)uracil. In Meyerozyma guilliermondii (strain ATCC 6260 / CBS 566 / DSM 6381 / JCM 1539 / NBRC 10279 / NRRL Y-324) (Yeast), this protein is Riboflavin synthase (RIB5).